We begin with the raw amino-acid sequence, 354 residues long: D-alanine--D-alanine ligase (354 aa).

The region spanning 132-342 (KMVFERAGLP…FPSLVDRLLQ (211 aa)) is the ATP-grasp domain. Position 168–223 (168–223 (EAQVGYPCFVKPANLGSSVGIAKVRNRSELEAALDNAASYDRRIIVEAGLTDIREV)) interacts with ATP. Residues Asp295, Glu309, and Asn311 each contribute to the Mg(2+) site.

The protein belongs to the D-alanine--D-alanine ligase family. Mg(2+) serves as cofactor. The cofactor is Mn(2+).

Its subcellular location is the cytoplasm. The enzyme catalyses 2 D-alanine + ATP = D-alanyl-D-alanine + ADP + phosphate + H(+). The protein operates within cell wall biogenesis; peptidoglycan biosynthesis. Its function is as follows. Cell wall formation. In Synechocystis sp. (strain ATCC 27184 / PCC 6803 / Kazusa), this protein is D-alanine--D-alanine ligase.